Reading from the N-terminus, the 511-residue chain is Bifunctional purine biosynthesis protein PurH (511 aa).

One can recognise an MGS-like domain in the interval 1–145 (MKKRALVSVS…KNHKFVSVIV (145 aa)).

This sequence belongs to the PurH family.

The enzyme catalyses (6R)-10-formyltetrahydrofolate + 5-amino-1-(5-phospho-beta-D-ribosyl)imidazole-4-carboxamide = 5-formamido-1-(5-phospho-D-ribosyl)imidazole-4-carboxamide + (6S)-5,6,7,8-tetrahydrofolate. It catalyses the reaction IMP + H2O = 5-formamido-1-(5-phospho-D-ribosyl)imidazole-4-carboxamide. The protein operates within purine metabolism; IMP biosynthesis via de novo pathway; 5-formamido-1-(5-phospho-D-ribosyl)imidazole-4-carboxamide from 5-amino-1-(5-phospho-D-ribosyl)imidazole-4-carboxamide (10-formyl THF route): step 1/1. It participates in purine metabolism; IMP biosynthesis via de novo pathway; IMP from 5-formamido-1-(5-phospho-D-ribosyl)imidazole-4-carboxamide: step 1/1. The protein is Bifunctional purine biosynthesis protein PurH of Bacillus cereus (strain ATCC 10987 / NRS 248).